The primary structure comprises 485 residues: NADH-quinone oxidoreductase subunit N (485 aa).

14 consecutive transmembrane segments (helical) span residues 8–28 (LIAL…MLSI), 35–55 (FVNA…LYFV), 75–95 (FYTG…YPWL), 105–125 (FYLL…ASHL), 127–147 (SLFI…GYAF), 159–179 (YTIL…LVYA), 203–223 (LLAG…LVPF), 235–255 (PAPV…GVLM), 271–291 (TVLG…AISQ), 297–317 (LLGY…IAVQ), 326–346 (VGVY…VVSL), 373–393 (AAVM…LGFI), 408–427 (WWLT…YYLR), and 449–469 (AFTA…VLGI).

It belongs to the complex I subunit 2 family. In terms of assembly, NDH-1 is composed of 13 different subunits. Subunits NuoA, H, J, K, L, M, N constitute the membrane sector of the complex.

Its subcellular location is the cell inner membrane. The enzyme catalyses a quinone + NADH + 5 H(+)(in) = a quinol + NAD(+) + 4 H(+)(out). Its function is as follows. NDH-1 shuttles electrons from NADH, via FMN and iron-sulfur (Fe-S) centers, to quinones in the respiratory chain. The immediate electron acceptor for the enzyme in this species is believed to be ubiquinone. Couples the redox reaction to proton translocation (for every two electrons transferred, four hydrogen ions are translocated across the cytoplasmic membrane), and thus conserves the redox energy in a proton gradient. This is NADH-quinone oxidoreductase subunit N from Erwinia tasmaniensis (strain DSM 17950 / CFBP 7177 / CIP 109463 / NCPPB 4357 / Et1/99).